The chain runs to 201 residues: MGICLIIVGLALLALEPYKIKAPKNIDKLKENAETLKHFDGGFNPDNFFNTYKTKIAFKESDSLVKIYQLNKDEHIEEYTIPFSNVIESEIALDNQIISKVSKSGIVAGGLLAGGIGAAIGGLSASSIQNEMVKSVTLKITVEDLGKPIHYIDFLPTQEVEGYNIQGYKKDSNVIQQALTNAEYWHGVMDVIIKKANKVAQ.

The protein is Immunity protein (D) of Bacillus pumilus (Bacillus mesentericus).